Consider the following 171-residue polypeptide: ATP synthase subunit b 2 (171 aa).

The helical transmembrane segment at 9-29 threads the bilayer; sequence APWHHPVFWVAVAFVLFFVLF.

Belongs to the ATPase B chain family. As to quaternary structure, F-type ATPases have 2 components, F(1) - the catalytic core - and F(0) - the membrane proton channel. F(1) has five subunits: alpha(3), beta(3), gamma(1), delta(1), epsilon(1). F(0) has three main subunits: a(1), b(2) and c(10-14). The alpha and beta chains form an alternating ring which encloses part of the gamma chain. F(1) is attached to F(0) by a central stalk formed by the gamma and epsilon chains, while a peripheral stalk is formed by the delta and b chains.

It is found in the cell inner membrane. Functionally, f(1)F(0) ATP synthase produces ATP from ADP in the presence of a proton or sodium gradient. F-type ATPases consist of two structural domains, F(1) containing the extramembraneous catalytic core and F(0) containing the membrane proton channel, linked together by a central stalk and a peripheral stalk. During catalysis, ATP synthesis in the catalytic domain of F(1) is coupled via a rotary mechanism of the central stalk subunits to proton translocation. In terms of biological role, component of the F(0) channel, it forms part of the peripheral stalk, linking F(1) to F(0). This is ATP synthase subunit b 2 from Granulibacter bethesdensis (strain ATCC BAA-1260 / CGDNIH1).